The primary structure comprises 440 residues: Transposon Ty1-BR Gag polyprotein (440 aa).

Polar residues-rich tracts occupy residues 1 to 10, 48 to 60, and 127 to 152; these read MESQQLSNYP, TKANSQQTTTPAS, and QSQFPQYPSSVGTPLSTPSPESGNTF. Disordered stretches follow at residues 1–93, 126–173, and 352–440; these read MESQ…MMTQ, PQSQ…RPPP, and GSRN…PETY. Over residues 153 to 165 the composition is skewed to low complexity; sequence TDSSSADSDMTST. Positions 299-401 are RNA-binding; it reads NNGIHINNKV…NSKSKTARAH (103 aa). Positions 402–418 are enriched in low complexity; it reads NVSTSNNSPSTDNDSIS. Position 416 is a phosphoserine (serine 416). Over residues 419–428 the composition is skewed to polar residues; that stretch reads KSTTEPIQLN. Residues 429–440 show a composition bias toward basic and acidic residues; the sequence is NKHDLHLRPETY.

Homotrimer.

The protein localises to the cytoplasm. In terms of biological role, capsid protein (CA) is the structural component of the virus-like particle (VLP), forming the shell that encapsulates the retrotransposons dimeric RNA genome. The particles are assembled from trimer-clustered units and there are holes in the capsid shells that allow for the diffusion of macromolecules. CA also has nucleocapsid-like chaperone activity, promoting primer tRNA(i)-Met annealing to the multipartite primer-binding site (PBS), dimerization of Ty1 RNA and initiation of reverse transcription. This is Transposon Ty1-BR Gag polyprotein (TY1A-BR) from Saccharomyces cerevisiae (strain ATCC 204508 / S288c) (Baker's yeast).